A 237-amino-acid polypeptide reads, in one-letter code: DNA repair protein RecO (237 aa).

This sequence belongs to the RecO family.

Functionally, involved in DNA repair and RecF pathway recombination. The chain is DNA repair protein RecO from Cereibacter sphaeroides (strain ATCC 17025 / ATH 2.4.3) (Rhodobacter sphaeroides).